A 367-amino-acid chain; its full sequence is Centromere protein L (367 aa).

The protein belongs to the CENP-L/IML3 family.

The protein resides in the nucleus. It localises to the chromosome. It is found in the centromere. Probable component of a centromeric complex involved in assembly of kinetochore proteins, mitotic progression and chromosome segregation. This is Centromere protein L (cenpl) from Danio rerio (Zebrafish).